The following is a 276-amino-acid chain: Hydroxyethylthiazole kinase (276 aa).

ATP-binding residues include R126 and S172. G199 contacts substrate.

Belongs to the Thz kinase family. It depends on Mg(2+) as a cofactor.

It catalyses the reaction 5-(2-hydroxyethyl)-4-methylthiazole + ATP = 4-methyl-5-(2-phosphooxyethyl)-thiazole + ADP + H(+). It participates in cofactor biosynthesis; thiamine diphosphate biosynthesis; 4-methyl-5-(2-phosphoethyl)-thiazole from 5-(2-hydroxyethyl)-4-methylthiazole: step 1/1. In terms of biological role, catalyzes the phosphorylation of the hydroxyl group of 4-methyl-5-beta-hydroxyethylthiazole (THZ). The protein is Hydroxyethylthiazole kinase of Burkholderia pseudomallei (strain 1710b).